Consider the following 1040-residue polypeptide: ATPase family AAA domain-containing protein 2 (1040 aa).

Basic residues predominate over residues 1 to 11; it reads MSLLKMRRHAI. Residues 1–30 form a disordered region; the sequence is MSLLKMRRHAIHSSDSTSSSSSEDDCFERR. At S65 the chain carries Phosphoserine. 122–129 is an ATP binding site; the sequence is GPPGTGKT. Phosphoserine is present on residues S401 and S406. Coiled coils occupy residues 619 to 643 and 735 to 761; these read LTAEEVKRLEEQEEDTFRELRIFLR and YAIIKEELDEDFEQLCEEIQESRKKRG. Residues 629–741 enclose the Bromo domain; that stretch reads EQEEDTFREL…DTAYAIIKEE (113 aa). The tract at residues 772–799 is disordered; sequence YHVMPKQNSPPVGDKKPDQEQNEKLKVP. Residues K777 and K797 each participate in a glycyl lysine isopeptide (Lys-Gly) (interchain with G-Cter in SUMO2) cross-link. Residues 784-797 show a composition bias toward basic and acidic residues; the sequence is GDKKPDQEQNEKLK. 2 positions are modified to phosphothreonine: T801 and T825. Over residues 811 to 833 the composition is skewed to basic residues; that stretch reads LKRKFHKKSKWHVGTKIKRRKIS. A disordered region spans residues 811-935; sequence LKRKFHKKSK…SQVTDIPEDS (125 aa). The span at 835–848 shows a compositional bias: polar residues; the sequence is AKDNSLNAMNSSSR. S849, S883, and S891 each carry phosphoserine. 2 stretches are compositionally biased toward basic and acidic residues: residues 849 to 863 and 874 to 885; these read SDTEDSQHTHAEHTE and ESDKQNRLESNI. The span at 901–919 shows a compositional bias: basic and acidic residues; it reads EEPKETTEGTELRKDRIVC. S951 is modified (phosphoserine). Position 972 is a phosphothreonine (T972).

The protein belongs to the AAA ATPase family. Interacts with ESR1 and NCOA3 and these interactions are enhanced by estradiol. Interacts with acetylated lysine residues on histone H1.4, H2A, H2B and H3 (in vitro).

Its subcellular location is the nucleus. The enzyme catalyses ATP + H2O = ADP + phosphate + H(+). In terms of biological role, may be a transcriptional coactivator of the nuclear receptor ESR1 required to induce the expression of a subset of estradiol target genes, such as CCND1, MYC and E2F1. May play a role in the recruitment or occupancy of CREBBP at some ESR1 target gene promoters. May be required for histone hyperacetylation. The polypeptide is ATPase family AAA domain-containing protein 2 (Atad2) (Mus musculus (Mouse)).